We begin with the raw amino-acid sequence, 122 residues long: Acidic phospholipase A2 (122 aa).

Disulfide bonds link C26/C115, C28/C44, C43/C95, C49/C122, C50/C88, C57/C81, and C75/C86. The Ca(2+) site is built by Y27, G29, and G31. Residue H47 is part of the active site. D48 is a Ca(2+) binding site. Residue D89 is part of the active site.

May form tetramers. The cofactor is Ca(2+). In terms of tissue distribution, expressed by the venom gland.

It localises to the secreted. It carries out the reaction a 1,2-diacyl-sn-glycero-3-phosphocholine + H2O = a 1-acyl-sn-glycero-3-phosphocholine + a fatty acid + H(+). PLA2 catalyzes the calcium-dependent hydrolysis of the 2-acyl groups in 3-sn-phosphoglycerides. In vivo, is non-lethal to mice when intravenously injected up to a concentration of 30 ug, however does show significant edematogenic activity at the injection site. In Lachesis acrochorda (Chocoan bushmaster), this protein is Acidic phospholipase A2.